The sequence spans 263 residues: Isatin hydrolase (263 aa).

62–66 (FFAWN) serves as a coordination point for substrate. Positions 73, 77, and 79 each coordinate Mn(2+). His-83 functions as the Proton donor/acceptor in the catalytic mechanism. Residue His-212 coordinates substrate.

It belongs to the Cyclase 1 superfamily. In terms of assembly, homodimer. Mn(2+) is required as a cofactor.

The enzyme catalyses isatin + H2O = isatinate + H(+). Its activity is regulated as follows. Inhibited by thioisatinate. Involved in the degradation of the plant hormone indole-3-acetic acid (IAA). Catalyzes the hydrolysis of the cyclic amide bond (lactam) of isatin (1H-indole-2,3-dione) to yield isatinate (2-(2-aminophenyl)-2-oxoacetate). This Roseibium aggregatum (strain ATCC 25650 / DSM 13394 / JCM 20685 / NBRC 16684 / NCIMB 2208 / IAM 12614 / B1) (Stappia aggregata) protein is Isatin hydrolase.